The primary structure comprises 60 residues: Protein translocase subunit SecE (60 aa).

The chain crosses the membrane as a helical span at residues 31–51 (IIVVSTVIFFLVFFYALDIGI).

Belongs to the SecE/SEC61-gamma family. As to quaternary structure, component of the Sec protein translocase complex. Heterotrimer consisting of SecY, SecE and SecG subunits. The heterotrimers can form oligomers, although 1 heterotrimer is thought to be able to translocate proteins. Interacts with the ribosome. Interacts with SecDF, and other proteins may be involved. Interacts with SecA.

It localises to the cell membrane. Essential subunit of the Sec protein translocation channel SecYEG. Clamps together the 2 halves of SecY. May contact the channel plug during translocation. The chain is Protein translocase subunit SecE from Staphylococcus epidermidis (strain ATCC 35984 / DSM 28319 / BCRC 17069 / CCUG 31568 / BM 3577 / RP62A).